Reading from the N-terminus, the 94-residue chain is Protein RnfH (94 aa).

This sequence belongs to the UPF0125 (RnfH) family.

This chain is Protein RnfH, found in Sodalis glossinidius (strain morsitans).